The following is a 390-amino-acid chain: Transforming growth factor beta-1 proprotein (390 aa).

The first 29 residues, 1-29 (MPPSGLRLLPLLLPLLWLLMLTPGRPVAG), serve as a signal peptide directing secretion. A straightjacket domain region spans residues 30–74 (LSTCKTIDMELVKRKRIEAIRGQILSKLRLASPPSQGDVPPGPLP). Residues 75 to 271 (EAILALYNST…ATPLERAQHL (197 aa)) form an arm domain region. N-linked (GlcNAc...) asparagine glycans are attached at residues N82, N136, and N176. Residues 226–252 (DSKDNTLQVDINGFSSGRRGDLATIHG) are bowtie tail. The Cell attachment site motif lies at 244–246 (RGD). 4 cysteine pairs are disulfide-bonded: C285–C294, C293–C356, C322–C387, and C326–C389.

It belongs to the TGF-beta family. Homodimer; disulfide-linked. Interacts with the serine proteases, HTRA1 and HTRA3: the interaction with either inhibits TGFB1-mediated signaling and the HTRA protease activity is required for this inhibition. May interact with THSD4; this interaction may lead to sequestration by FBN1 microfibril assembly and attenuation of TGFB signaling. Interacts with CD109, DPT and ASPN. Interacts with EFEMP2. Interacts with TSKU; the interaction contributes to regulation of the hair cycle. Interacts with TGFBR3. In terms of assembly, homodimer; disulfide-linked. Interacts with transforming growth factor beta-1 (TGF-beta-1) chain; interaction is non-covalent and maintains TGF-beta-1 in a latent state; each latency-associated peptide (LAP) monomer interacts with TGF-beta-1 in the other monomer. Interacts with LTBP1; leading to regulation of TGF-beta-1 activation. Interacts with LRRC32/GARP; leading to regulation of TGF-beta-1 activation on the surface of activated regulatory T-cells (Tregs). Interacts with LRRC33/NRROS; leading to regulation of TGF-beta-1 activation in macrophages and microglia. Interacts (via cell attachment site) with integrins ITGAV and ITGB6 (ITGAV:ITGB6), leading to release of the active TGF-beta-1. Interacts with NREP; the interaction results in a decrease in TGFB1 autoinduction. Interacts with HSP90AB1; inhibits latent TGFB1 activation. As to quaternary structure, homodimer; disulfide-linked. Interacts with TGF-beta receptors (TGFBR1 and TGFBR2), leading to signal transduction. Interacts with EFEMP2. Transforming growth factor beta-1 proprotein: The precursor proprotein is cleaved in the Golgi apparatus by FURIN to form Transforming growth factor beta-1 (TGF-beta-1) and Latency-associated peptide (LAP) chains, which remain non-covalently linked, rendering TGF-beta-1 inactive. In terms of processing, N-glycosylated. Deglycosylation leads to activation of Transforming growth factor beta-1 (TGF-beta-1); mechanisms triggering deglycosylation-driven activation of TGF-beta-1 are however unclear.

It localises to the secreted. The protein localises to the extracellular space. It is found in the extracellular matrix. Its function is as follows. Transforming growth factor beta-1 proprotein: Precursor of the Latency-associated peptide (LAP) and Transforming growth factor beta-1 (TGF-beta-1) chains, which constitute the regulatory and active subunit of TGF-beta-1, respectively. Functionally, required to maintain the Transforming growth factor beta-1 (TGF-beta-1) chain in a latent state during storage in extracellular matrix. Associates non-covalently with TGF-beta-1 and regulates its activation via interaction with 'milieu molecules', such as LTBP1, LRRC32/GARP and LRRC33/NRROS, that control activation of TGF-beta-1. Interaction with LRRC33/NRROS regulates activation of TGF-beta-1 in macrophages and microglia. Interaction with LRRC32/GARP controls activation of TGF-beta-1 on the surface of activated regulatory T-cells (Tregs). Interaction with integrins (ITGAV:ITGB6 or ITGAV:ITGB8) results in distortion of the Latency-associated peptide chain and subsequent release of the active TGF-beta-1. In terms of biological role, multifunctional protein that regulates the growth and differentiation of various cell types and is involved in various processes, such as normal development, immune function, microglia function and responses to neurodegeneration. Activation into mature form follows different steps: following cleavage of the proprotein in the Golgi apparatus, Latency-associated peptide (LAP) and Transforming growth factor beta-1 (TGF-beta-1) chains remain non-covalently linked rendering TGF-beta-1 inactive during storage in extracellular matrix. At the same time, LAP chain interacts with 'milieu molecules', such as LTBP1, LRRC32/GARP and LRRC33/NRROS that control activation of TGF-beta-1 and maintain it in a latent state during storage in extracellular milieus. TGF-beta-1 is released from LAP by integrins (ITGAV:ITGB6 or ITGAV:ITGB8): integrin-binding to LAP stabilizes an alternative conformation of the LAP bowtie tail and results in distortion of the LAP chain and subsequent release of the active TGF-beta-1. Once activated following release of LAP, TGF-beta-1 acts by binding to TGF-beta receptors (TGFBR1 and TGFBR2), which transduce signal. While expressed by many cells types, TGF-beta-1 only has a very localized range of action within cell environment thanks to fine regulation of its activation by Latency-associated peptide chain (LAP) and 'milieu molecules'. Plays an important role in bone remodeling: acts as a potent stimulator of osteoblastic bone formation, causing chemotaxis, proliferation and differentiation in committed osteoblasts. Can promote either T-helper 17 cells (Th17) or regulatory T-cells (Treg) lineage differentiation in a concentration-dependent manner. At high concentrations, leads to FOXP3-mediated suppression of RORC and down-regulation of IL-17 expression, favoring Treg cell development. At low concentrations in concert with IL-6 and IL-21, leads to expression of the IL-17 and IL-23 receptors, favoring differentiation to Th17 cells. Stimulates sustained production of collagen through the activation of CREB3L1 by regulated intramembrane proteolysis (RIP). Mediates SMAD2/3 activation by inducing its phosphorylation and subsequent translocation to the nucleus. Positively regulates odontoblastic differentiation in dental papilla cells, via promotion of IPO7-mediated translocation of phosphorylated SMAD2 to the nucleus and subsequent transcription of target genes. Can induce epithelial-to-mesenchymal transition (EMT) and cell migration in various cell types. In Bos taurus (Bovine), this protein is Transforming growth factor beta-1 proprotein (TGFB1).